The primary structure comprises 293 residues: uncharacterized protein (293 aa).

This is an uncharacterized protein from Bos taurus (Bovine).